The following is a 346-amino-acid chain: Golgi-associated RAB2 interactor protein 2 (346 aa).

The interval 275–346 (TPVESEANTS…EKHVRQPKDF (72 aa)) is disordered. 2 stretches are compositionally biased toward basic and acidic residues: residues 283-297 (TSKE…EKTP) and 334-346 (KLVE…PKDF).

Belongs to the GARIN family. Interacts with CALM1.

It localises to the cell projection. The protein resides in the cilium. Its subcellular location is the flagellum. In terms of biological role, seems to play a role in sperm motility. The sequence is that of Golgi-associated RAB2 interactor protein 2 (GARIN2) from Macaca fascicularis (Crab-eating macaque).